The primary structure comprises 464 residues: Soluble pyridine nucleotide transhydrogenase (464 aa).

35–44 provides a ligand contact to FAD; the sequence is DSRRVVGGNC.

This sequence belongs to the class-I pyridine nucleotide-disulfide oxidoreductase family. FAD serves as cofactor.

It is found in the cytoplasm. The enzyme catalyses NAD(+) + NADPH = NADH + NADP(+). Conversion of NADPH, generated by peripheral catabolic pathways, to NADH, which can enter the respiratory chain for energy generation. The polypeptide is Soluble pyridine nucleotide transhydrogenase (Pseudomonas paraeruginosa (strain DSM 24068 / PA7) (Pseudomonas aeruginosa (strain PA7))).